The primary structure comprises 185 residues: uncharacterized protein (185 aa).

The next 2 helical transmembrane spans lie at 1-19 and 105-125; these read MLNI…TSSA and AGFI…TMDV.

The protein resides in the membrane. This is an uncharacterized protein from Caenorhabditis elegans.